Reading from the N-terminus, the 47-residue chain is NTFSDENPGFPCDCTSADAKRACGIQCACWPRGDTPGGGRRIIDGQQ.

Residues 32-34 carry the Cell attachment site motif; sequence RGD.

Contains 2 disulfide bonds. As to expression, expressed in salivary glands.

The protein localises to the secreted. In terms of biological role, potently inhibits platelet aggregation induced by ADP (IC(50)=157 nM, complete inhibition at 514 nM). Also inhibits platelet aggregation induced by collagen and by the thrombin receptor peptide SFLLRNP. Is a potent antagonist of the fibrinogen receptor glycoprotein IIb-IIIa (ITGA2B/ITGB3) and the vitronectin receptor alpha-v/beta-3 (ITGAV/ITGB3). This is Variabilin from Dermacentor variabilis (American dog tick).